We begin with the raw amino-acid sequence, 548 residues long: Chaperonin GroEL (548 aa).

ATP-binding positions include Thr30–Pro33, Lys51, Asp87–Thr91, Gly415, and Asp495.

The protein belongs to the chaperonin (HSP60) family. Forms a cylinder of 14 subunits composed of two heptameric rings stacked back-to-back. Interacts with the co-chaperonin GroES.

Its subcellular location is the cytoplasm. It carries out the reaction ATP + H2O + a folded polypeptide = ADP + phosphate + an unfolded polypeptide.. Functionally, together with its co-chaperonin GroES, plays an essential role in assisting protein folding. The GroEL-GroES system forms a nano-cage that allows encapsulation of the non-native substrate proteins and provides a physical environment optimized to promote and accelerate protein folding. The polypeptide is Chaperonin GroEL (Yersinia pseudotuberculosis serotype O:1b (strain IP 31758)).